Reading from the N-terminus, the 427-residue chain is Enolase (427 aa).

Q163 lines the (2R)-2-phosphoglycerate pocket. Residue E205 is the Proton donor of the active site. Mg(2+) contacts are provided by D242, E285, and D312. Residues K337, R366, S367, and K388 each coordinate (2R)-2-phosphoglycerate. The active-site Proton acceptor is the K337.

This sequence belongs to the enolase family. The cofactor is Mg(2+).

Its subcellular location is the cytoplasm. It localises to the secreted. The protein resides in the cell surface. It carries out the reaction (2R)-2-phosphoglycerate = phosphoenolpyruvate + H2O. Its pathway is carbohydrate degradation; glycolysis; pyruvate from D-glyceraldehyde 3-phosphate: step 4/5. In terms of biological role, catalyzes the reversible conversion of 2-phosphoglycerate (2-PG) into phosphoenolpyruvate (PEP). It is essential for the degradation of carbohydrates via glycolysis. The chain is Enolase from Burkholderia lata (strain ATCC 17760 / DSM 23089 / LMG 22485 / NCIMB 9086 / R18194 / 383).